The primary structure comprises 319 residues: tRNA dimethylallyltransferase (319 aa).

11 to 18 is an ATP binding site; it reads GPTCSGKS. 13–18 contacts substrate; sequence TCSGKS. Interaction with substrate tRNA regions lie at residues 36–39 and 160–164; these read DSMQ and QRIAR.

Belongs to the IPP transferase family. In terms of assembly, monomer. Mg(2+) serves as cofactor.

It carries out the reaction adenosine(37) in tRNA + dimethylallyl diphosphate = N(6)-dimethylallyladenosine(37) in tRNA + diphosphate. Functionally, catalyzes the transfer of a dimethylallyl group onto the adenine at position 37 in tRNAs that read codons beginning with uridine, leading to the formation of N6-(dimethylallyl)adenosine (i(6)A). This Granulibacter bethesdensis (strain ATCC BAA-1260 / CGDNIH1) protein is tRNA dimethylallyltransferase.